The sequence spans 306 residues: Glutathione transport system permease protein GsiC (306 aa).

Residues 1 to 8 (MLNYVLKR) are Cytoplasmic-facing. A helical membrane pass occupies residues 9-29 (LLGLIPTLLIVAVLVFLFVHL). The Periplasmic portion of the chain corresponds to 30 to 102 (LPGDPARLIA…SRFLPTLWLT (73 aa)). Residues 95–292 (FLPTLWLTIT…LEFILINLVV (198 aa)) enclose the ABC transmembrane type-1 domain. A helical membrane pass occupies residues 103-123 (ITSMIWAVLFGMAIGIAAAVW). The Cytoplasmic portion of the chain corresponds to 124 to 134 (RNRWPDRLGMT). The chain crosses the membrane as a helical span at residues 135–155 (LAVTGISFPAFALGMLLMQIF). The Periplasmic segment spans residues 156–168 (SVDLGWLPTVGAD). The chain crosses the membrane as a helical span at residues 169–189 (SWQHYILPSLTLGAAVASVMA). Over 190–228 (RFTRSSFVDVLSEDYMRTARAKGVSETWVVLKHGLRNAM) the chain is Cytoplasmic. A helical transmembrane segment spans residues 229 to 249 (IPVVTMMGLQFGFLLGGSIVV). Over 250 to 278 (EKVFNWPGLGRLLVDSVDMRDYPVIQAEV) the chain is Periplasmic. The helical transmembrane segment at 279–299 (LLFSLEFILINLVVDVLYAAI) threads the bilayer. Residues 300-306 (NPAIRYK) are Cytoplasmic-facing.

It belongs to the binding-protein-dependent transport system permease family. As to quaternary structure, the complex is composed of two ATP-binding proteins (GsiA), two transmembrane proteins (GsiC and GsiD) and a solute-binding protein (GsiB).

It is found in the cell inner membrane. In terms of biological role, part of the ABC transporter complex GsiABCD involved in glutathione import. Probably responsible for the translocation of the substrate across the membrane. This is Glutathione transport system permease protein GsiC from Salmonella typhimurium (strain LT2 / SGSC1412 / ATCC 700720).